Reading from the N-terminus, the 938-residue chain is Microperfuranone synthase (938 aa).

Residues 44-445 form an adenylation (A) domain region; the sequence is TSTRISYAEL…AGRTKDTIIV (402 aa). The region spanning 579–655 is the Carrier domain; it reads SDSERAVQKA…AIARSIDSSR (77 aa). The tract at residues 581-652 is thiolation and peptide carrier (T) domain; sequence SERAVQKALV…TPGAIARSID (72 aa). O-(pantetheine 4'-phosphoryl)serine is present on Ser-613. The segment at 676-923 is thioesterase (TE) domain; that stretch reads PLFCIHPGSG…AKMLNREHIA (248 aa). Ser-746 is a catalytic residue.

It belongs to the ATP-dependent AMP-binding enzyme family.

It functions in the pathway secondary metabolite biosynthesis. Functionally, microperfuranone synthase is the only protein required for the biosynthesis of the secondary metabolite microperfuranone from phenylpyruvic acid (PPA). Several steps for the microperfuranione biosynthesis have been proposed. These steps include the activation of PPA, by the micA adenylation (A) domain to AMP-phenylpyruvic acid followed by loading of the PPA unit to the thiolation and peptide carrier (T) domain and eventually transferring to the thioesterase (TE) domain. After loading another PPA unit onto the T domain, aldol condensation establishes the carbon-carbon bond between the alpha- and beta-carbon of the two PPA units. Sulfur-assisted furan ring formation, TE domain mediated hydrolysis, decarboxylation, and keto-enol tautomerization would generate microperfuranone attached to the T domain. Finally, microperfuranone is released by the TE domain. In Emericella nidulans (strain FGSC A4 / ATCC 38163 / CBS 112.46 / NRRL 194 / M139) (Aspergillus nidulans), this protein is Microperfuranone synthase.